The chain runs to 1029 residues: Cilia- and flagella-associated protein 91 (1029 aa).

Disordered stretches follow at residues 72–97 (NYRP…GPNR) and 117–170 (PPSQ…PWEP). The stretch at 272-299 (LELLDNALQVREEELDDENRLRVEARKE) forms a coiled coil. Over residues 837–854 (ENQDQQEPQPQPQPSSSS) the composition is skewed to low complexity. Disordered regions lie at residues 837 to 861 (ENQD…DLAD) and 876 to 1029 (GEPS…EAAE). Over residues 890–910 (QQLEADAEAEAEAEAEAEAGA) the composition is skewed to acidic residues. The segment covering 911 to 921 (EAEASAQAGAE) has biased composition (low complexity). A compositionally biased stretch (acidic residues) spans 922–932 (AEAEAGVEAEA). The segment covering 933–944 (EASAGAEASVGA) has biased composition (low complexity). Residues 964 to 982 (PEAEAEAEAGAEAEAENGA) show a composition bias toward acidic residues. Residues 984-999 (AEARLGGEEEGFREGE) show a composition bias toward basic and acidic residues. Residues 1000–1015 (GQGGAAAGEAGPGGEL) show a composition bias toward gly residues. Residues 1016 to 1029 (AEGEGEAGEGEAAE) show a composition bias toward acidic residues.

It belongs to the CFAP91 family. As to quaternary structure, identified in a spoke-associated complex containing CFAP61, CFAP91 and CFAP251; the complex is associated with the radial spokes of the axoneme. The complex associates with Calmodulin; the association is calcium sensitive. Interacts with RSP3.

Its subcellular location is the cytoplasm. It localises to the cytoskeleton. The protein localises to the flagellum axoneme. Functionally, as component of a spoke-associated complex, regulates flagellar dynein activity by mediating regulatory signals between the radial spokes and dynein arms. The chain is Cilia- and flagella-associated protein 91 from Chlamydomonas reinhardtii (Chlamydomonas smithii).